The primary structure comprises 660 residues: Pro-secreted protein ORF2 (660 aa).

Positions 1–23 are cleaved as a signal peptide; it reads MRPRAVLLLLFVLLPMLPAPPAG. Disordered regions lie at residues 19-43 and 64-125; these read APPA…GFWG and ADVV…VPDV. A Nuclear localization signal motif is present at residues 28 to 33; sequence RRRGRR. Over residues 93-124 the composition is skewed to low complexity; the sequence is RPSAAPRRRSAPAGAAPLTAVSPAPDTAPVPD. Asparagine 137 and asparagine 310 each carry an N-linked (GlcNAc...) asparagine; by host glycan. Positions 368 to 394 are particle formation; sequence IALTLFNLADTLLGGLPTELISSAGGQ. N-linked (GlcNAc...) asparagine; by host glycosylation is present at asparagine 562. An oligomerization region spans residues 585 to 610; it reads TTSLGAGPTSISAVGVLAPHSALAVL.

Belongs to the hepevirus capsid protein family. As to quaternary structure, homodimer. In terms of assembly, self-assembles to form the capsid. The capsid is dominated by dimers that define the 30 morphological units. Interacts with phosphorylated protein ORF3. Interacts with host TMEM134. Interacts with host ASGR1 and ASGR2; these interactions facilitate infection of host hepatocytes. In terms of processing, cleaved by host protease in the N-terminus. Post-translationally, N-glycosylated. Not N-glycosylated. The C-terminus of the capsid protein ORF2 is truncated in non-enveloped virions shedded in feces, probably due to host proteases.

The protein localises to the secreted. It localises to the virion. The protein resides in the host cytoplasm. Its subcellular location is the host endoplasmic reticulum. It is found in the host Golgi apparatus. The protein localises to the host cell surface. It localises to the host nucleus. In terms of biological role, plays a role in the inhibition of host antibody-mediated neutralization without blocking viral cell entry. Forms an icosahedral capsid with a T=1 symmetry and a 34 nm diameter. The capsid is composed of 60 copies linked to each other. Binds to the 5' end of the genomic RNA to mediate genome encapsidation. Binds to heparin surface proteoglycans (HSPGs) to mediate viral entry. Additionally, the interactions with host ASGR1 and ASGR2 facilitate viral infection of hepatocytes. Inhibits IFN production by blocking host TBK1-induced IRF3 phosphorylation. The nuclear form probably modulates host gene expression. In Hepatitis E virus genotype 3 (isolate Human/United States/US2) (HEV-3), this protein is Pro-secreted protein ORF2.